Here is a 285-residue protein sequence, read N- to C-terminus: Dioxygenase andF (285 aa).

H128, D130, and H205 together coordinate Fe cation.

This sequence belongs to the PhyH family. As to quaternary structure, homodimer. It depends on Fe cation as a cofactor.

It participates in secondary metabolite biosynthesis; terpenoid biosynthesis. In terms of biological role, dioxygenase; part of the gene cluster that mediates the biosynthesis of anditomin, a fungal meroterpenoid. The first step of the pathway is the synthesis of 3,5-dimethylorsellinic acid (DMOA) by the polyketide synthase andM. DMOA is then converted to the phthalide compound 5,7-dihydroxy-4,6-dimethylphthalide (DHDMP) by the cytochrome P450 monooxygenase andK, which is further prenylated by the prenyltransferase andD to yield farnesyl-DHDMP. Further epoxidation by the FAD-dependent monooxygenase andE leads to epoxyfarnesyl-DHDMP. The next step involves the terpene cyclase andB that converts epoxyfarnesyl-DHDMP into preandiloid A through opening of the epoxide ring followed by the cyclization of the farnesyl moiety. Preandiloid A is in turn oxidized at the C-3 hydroxyl group to yield preandiloid B by the dehydrogenase andC. The dioxygenase andA is solely responsible for the dehydrogenation of preandiloid B leading to the enone preandiloid C, as well as for the intriguing structural rearrangement to generate the bicyclo[2.2.2]octane core, transforming preandiloid C into andiconin. FAD-binding monooxygenase andJ then produces andilesin D which is reduced by dehydrogenase andI to yield andilesin A. Action of acetyltransferase andG followed by a spontaneous acetate elimination leads then to andilesin B, which is in turn substrate of the short chain dehydrogenase andH to yield andilesin C. Finally, the dioxygenase andF catalyzes the transformation of andilesin C to anditomin. The protein is Dioxygenase andF of Emericella variicolor (Aspergillus stellatus).